Consider the following 103-residue polypeptide: Mitochondrial import inner membrane translocase subunit Tim10 B (103 aa).

Residues 28–52 carry the Twin CX3C motif motif; it reads CFQRCVPSLHHRALDAEEEACLHSC. Disulfide bonds link Cys28-Cys52 and Cys32-Cys48.

This sequence belongs to the small Tim family. In terms of assembly, component of the TIM22 complex, which core is composed of TIMM22, associated with TIMM10 (TIMM10A and/or TIMM10B), TIMM9, AGK and TIMM29. Ubiquitous, with highest expression in heart, kidney, liver and skeletal muscle.

Its subcellular location is the mitochondrion inner membrane. Functionally, component of the TIM22 complex, a complex that mediates the import and insertion of multi-pass transmembrane proteins into the mitochondrial inner membrane. The TIM22 complex forms a twin-pore translocase that uses the membrane potential as the external driving force. In the TIM22 complex, it may act as a docking point for the soluble 70 kDa complex that guides the target proteins in transit through the aqueous mitochondrial intermembrane space. In Homo sapiens (Human), this protein is Mitochondrial import inner membrane translocase subunit Tim10 B (TIMM10B).